An 86-amino-acid polypeptide reads, in one-letter code: DNA-directed RNA polymerase subunit omega (86 aa).

A compositionally biased stretch (basic and acidic residues) spans 67–76 (SAREHAKESQ). The interval 67-86 (SAREHAKESQVSEEEVREES) is disordered. Positions 77–86 (VSEEEVREES) are enriched in acidic residues.

The protein belongs to the RNA polymerase subunit omega family. In terms of assembly, the RNAP catalytic core consists of 2 alpha, 1 beta, 1 beta' and 1 omega subunit. When a sigma factor is associated with the core the holoenzyme is formed, which can initiate transcription.

It catalyses the reaction RNA(n) + a ribonucleoside 5'-triphosphate = RNA(n+1) + diphosphate. Functionally, promotes RNA polymerase assembly. Latches the N- and C-terminal regions of the beta' subunit thereby facilitating its interaction with the beta and alpha subunits. This is DNA-directed RNA polymerase subunit omega from Nitrosococcus oceani (strain ATCC 19707 / BCRC 17464 / JCM 30415 / NCIMB 11848 / C-107).